The sequence spans 269 residues: Lipid II flippase Amj (269 aa).

Helical transmembrane passes span 1 to 21 (MHVITTQVLFIFCFLLLIHSI), 31 to 51 (SGARVGFIASALSLFNVMVIV), 84 to 104 (FLIFGSTVGTILGIILLPSFV), 105 to 125 (ALFSRAIIHLAGGGGSVFQVF), 161 to 181 (LFVINMLITSIYTIGVLSALY), 192 to 212 (TAVMASGLINGIATMLLAIFV), and 245 to 265 (VAGTLLAQLMFIPGAYYIAWL).

The protein belongs to the Amj family.

It localises to the cell membrane. The protein operates within cell wall biogenesis; peptidoglycan biosynthesis. In terms of biological role, involved in peptidoglycan biosynthesis. Transports lipid-linked peptidoglycan precursors from the inner to the outer leaflet of the cytoplasmic membrane. May serve as a defense mechanism against naturally occurring MurJ antagonists. The protein is Lipid II flippase Amj of Bacillus subtilis (strain 168).